The chain runs to 376 residues: Succinyl-diaminopimelate desuccinylase (376 aa).

Histidine 67 is a Zn(2+) binding site. Residue aspartate 69 is part of the active site. Aspartate 100 provides a ligand contact to Zn(2+). Glutamate 134 functions as the Proton acceptor in the catalytic mechanism. Positions 135, 163, and 349 each coordinate Zn(2+).

The protein belongs to the peptidase M20A family. DapE subfamily. Homodimer. It depends on Zn(2+) as a cofactor. Requires Co(2+) as cofactor.

The enzyme catalyses N-succinyl-(2S,6S)-2,6-diaminopimelate + H2O = (2S,6S)-2,6-diaminopimelate + succinate. Its pathway is amino-acid biosynthesis; L-lysine biosynthesis via DAP pathway; LL-2,6-diaminopimelate from (S)-tetrahydrodipicolinate (succinylase route): step 3/3. In terms of biological role, catalyzes the hydrolysis of N-succinyl-L,L-diaminopimelic acid (SDAP), forming succinate and LL-2,6-diaminopimelate (DAP), an intermediate involved in the bacterial biosynthesis of lysine and meso-diaminopimelic acid, an essential component of bacterial cell walls. The sequence is that of Succinyl-diaminopimelate desuccinylase from Haemophilus ducreyi (strain 35000HP / ATCC 700724).